Consider the following 114-residue polypeptide: Adapter SH3BGRL (114 aa).

The tract at residues 13-50 is required for interaction with HER2; it reads SMAIKKKQQDVLGFLEANKIGFEEKDIAANEENRKWMR. Residues 54–71 are required for interaction with PFN1, HER2, and ATG12; it reads PENSRPATGYPLPPQIFN. Positions 61–67 match the SH3-binding motif; sequence TGYPLPP.

This sequence belongs to the SH3BGR family. In terms of assembly, monomer. Interacts with PFN1/Profilin-1. Interacts with ERBB2. Interacts with ATG12. Interacts with BECN1. Interacts with translating ribosomes.

The protein localises to the cytoplasm. Its subcellular location is the cytosol. The protein resides in the cell membrane. Its function is as follows. Appears to function as an adapter protein that bridges proteins together or proteins with mRNAs. May function as a ubiquitin ligase-substrate adapter. Additionally, associates with translating cytoplasmic ribosomes and may promote the expression of specific mRNAs. In Bos taurus (Bovine), this protein is Adapter SH3BGRL (SH3BGRL).